The sequence spans 389 residues: Lipid-A-disaccharide synthase (389 aa).

Belongs to the LpxB family.

The catalysed reaction is a lipid X + a UDP-2-N,3-O-bis[(3R)-3-hydroxyacyl]-alpha-D-glucosamine = a lipid A disaccharide + UDP + H(+). It functions in the pathway bacterial outer membrane biogenesis; LPS lipid A biosynthesis. Condensation of UDP-2,3-diacylglucosamine and 2,3-diacylglucosamine-1-phosphate to form lipid A disaccharide, a precursor of lipid A, a phosphorylated glycolipid that anchors the lipopolysaccharide to the outer membrane of the cell. The sequence is that of Lipid-A-disaccharide synthase from Histophilus somni (strain 2336) (Haemophilus somnus).